Here is a 430-residue protein sequence, read N- to C-terminus: Serine hydroxymethyltransferase (430 aa).

(6S)-5,6,7,8-tetrahydrofolate-binding positions include L123 and 127-129 (GHL). The residue at position 232 (K232) is an N6-(pyridoxal phosphate)lysine. E248 contributes to the (6S)-5,6,7,8-tetrahydrofolate binding site.

The protein belongs to the SHMT family. As to quaternary structure, homodimer. The cofactor is pyridoxal 5'-phosphate.

It is found in the cytoplasm. It carries out the reaction (6R)-5,10-methylene-5,6,7,8-tetrahydrofolate + glycine + H2O = (6S)-5,6,7,8-tetrahydrofolate + L-serine. The protein operates within one-carbon metabolism; tetrahydrofolate interconversion. It functions in the pathway amino-acid biosynthesis; glycine biosynthesis; glycine from L-serine: step 1/1. In terms of biological role, catalyzes the reversible interconversion of serine and glycine with tetrahydrofolate (THF) serving as the one-carbon carrier. This reaction serves as the major source of one-carbon groups required for the biosynthesis of purines, thymidylate, methionine, and other important biomolecules. Also exhibits THF-independent aldolase activity toward beta-hydroxyamino acids, producing glycine and aldehydes, via a retro-aldol mechanism. The chain is Serine hydroxymethyltransferase from Anaplasma marginale (strain St. Maries).